The primary structure comprises 584 residues: A-type ATP synthase subunit A 2 (584 aa).

ATP is bound at residue 227–234; it reads GGFGTGKT.

It belongs to the ATPase alpha/beta chains family. Has multiple subunits with at least A(3), B(3), C, D, E, F, H, I and proteolipid K(x).

It is found in the cell membrane. The catalysed reaction is ATP + H2O + 4 H(+)(in) = ADP + phosphate + 5 H(+)(out). Its function is as follows. Component of the A-type ATP synthase that produces ATP from ADP in the presence of a proton gradient across the membrane. The A chain is the catalytic subunit. In Methanospirillum hungatei JF-1 (strain ATCC 27890 / DSM 864 / NBRC 100397 / JF-1), this protein is A-type ATP synthase subunit A 2.